Here is a 149-residue protein sequence, read N- to C-terminus: MSQTHRILLLNGPNLNMLGAREPKHYGSISLESIEEKIQTLATQHNVKVECFQANSEGKLINKIHESFQQVDFILINPAAYTHTSVALRDALLAVSIPFVEIHLSNVHKREPFRHHSYFSDVAEGVICGLGAKGYEFAFLFAMDYLAKK.

The active-site Proton acceptor is the Tyr26. Substrate contacts are provided by Asn77, His83, and Asp90. Catalysis depends on His103, which acts as the Proton donor. Substrate is bound by residues 104–105 and Arg114; that span reads LS.

The protein belongs to the type-II 3-dehydroquinase family. In terms of assembly, homododecamer.

The catalysed reaction is 3-dehydroquinate = 3-dehydroshikimate + H2O. It functions in the pathway metabolic intermediate biosynthesis; chorismate biosynthesis; chorismate from D-erythrose 4-phosphate and phosphoenolpyruvate: step 3/7. Functionally, catalyzes a trans-dehydration via an enolate intermediate. The polypeptide is 3-dehydroquinate dehydratase (aroQ) (Haemophilus influenzae (strain ATCC 51907 / DSM 11121 / KW20 / Rd)).